Reading from the N-terminus, the 421-residue chain is Gamma-glutamyl phosphate reductase (421 aa).

This sequence belongs to the gamma-glutamyl phosphate reductase family.

It is found in the cytoplasm. The enzyme catalyses L-glutamate 5-semialdehyde + phosphate + NADP(+) = L-glutamyl 5-phosphate + NADPH + H(+). Its pathway is amino-acid biosynthesis; L-proline biosynthesis; L-glutamate 5-semialdehyde from L-glutamate: step 2/2. Its function is as follows. Catalyzes the NADPH-dependent reduction of L-glutamate 5-phosphate into L-glutamate 5-semialdehyde and phosphate. The product spontaneously undergoes cyclization to form 1-pyrroline-5-carboxylate. The polypeptide is Gamma-glutamyl phosphate reductase (Pseudomonas aeruginosa (strain LESB58)).